The chain runs to 225 residues: Proteoglycan 3 (225 aa).

An N-terminal signal peptide occupies residues 1–17 (MQCLLLLPFLLLGTVSA). The C-type lectin domain occupies 107-224 (CKICRYLLVR…CDKQLPFVCS (118 aa)). 2 disulfide bridges follow: Cys-128-Cys-223 and Cys-200-Cys-215.

As to expression, expressed in bone marrow. Not detected in placenta.

The protein resides in the cytoplasmic granule. Possesses similar cytotoxic and cytostimulatory activities to PRG2/MBP. In vitro, stimulates neutrophil superoxide production and IL8 release, and histamine and leukotriene C4 release from basophils. This Homo sapiens (Human) protein is Proteoglycan 3.